Reading from the N-terminus, the 900-residue chain is Nuclear factor NF-kappa-B p100 subunit (900 aa).

Phosphoserine is present on residues Ser-23 and Ser-161. The region spanning 38–343 (PYLVIVEQPK…EVQRKRRKAL (306 aa)) is the RHD domain. Positions 337 to 341 (RKRRK) match the Nuclear localization signal motif. A GRR region spans residues 346 to 377 (FSQPFGGGSHMGGGSGGAAGGYGGAGGGGSLG). The interval 404-435 (GAQMAATVPSRDSGEEAAEPSAPSRTPQCEPQ) is disordered. The residue at position 429 (Thr-429) is a Phosphothreonine. ANK repeat units lie at residues 487–519 (NGDTPLHLAIIHGQTSVIEQIVYVIHHAQDLGV), 526–555 (LHQTPLHLAVITGQTSVVSFLLRVGADPAL), 559–591 (HGDSAMHLALRAGAGAPELLRALLQSGAPAVPQ), 599–628 (EGLYPVHLAVRARSPECLDLLVDSGAEVEA), 633–663 (GGRTALHLATEMEELGLVTHLVTKLRANVNA), and 667–696 (AGNTPLHLAAGLGYPTLTRLLLKAGADIHA). Residues 698-734 (NEEPLCPLPSPPTSDSDSDSEGPEKDTRSSFRGHTPL) form a disordered region. Phosphoserine occurs at positions 713, 715, and 717. Residues 729-758 (RGHTPLDLTCSTKVKTLLLNAAQNTMEPPL) form an ANK 7 repeat. The 88-residue stretch at 764-851 (AGPGLSLGDT…EGVRLLRGPE (88 aa)) folds into the Death domain. Ser-812 carries the post-translational modification Phosphoserine. A compositionally biased stretch (basic and acidic residues) spans 849–866 (GPETRDKLPSTAEVKEDS). The tract at residues 849–900 (GPETRDKLPSTAEVKEDSAYGSQSVEQEAEKLGPPPEPPGGLCHGHPQPQVH) is disordered. A Glycyl lysine isopeptide (Lys-Gly) (interchain with G-Cter in ubiquitin) cross-link involves residue Lys-855. Residues Ser-866 and Ser-870 each carry the phosphoserine; by MAP3K14 modification. The segment covering 888-900 (GGLCHGHPQPQVH) has biased composition (low complexity).

As to quaternary structure, component of the NF-kappa-B RelB-p52 complex. Homodimer; component of the NF-kappa-B p52-p52 complex. Component of the NF-kappa-B p65-p52 complex. Component of the NF-kappa-B p52-c-Rel complex. NFKB2/p52 interacts with NFKBIE. Component of a complex consisting of the NF-kappa-B p50-p50 homodimer and BCL3. Directly interacts with MEN1. In terms of processing, while translation occurs, the particular unfolded structure after the GRR repeat promotes the generation of p52 making it an acceptable substrate for the proteasome. This process is known as cotranslational processing. The processed form is active and the unprocessed form acts as an inhibitor (I kappa B-like), being able to form cytosolic complexes with NF-kappa B, trapping it in the cytoplasm. Complete folding of the region downstream of the GRR repeat precludes processing. Subsequent to MAP3K14-dependent serine phosphorylation, p100 polyubiquitination occurs then triggering its proteasome-dependent processing. Post-translationally, constitutive processing is tightly suppressed by its C-terminal processing inhibitory domain, named PID, which contains the death domain. In terms of processing, ubiquitinated by TRIM55; leading to processing by VCP and subsequent ubiquitin-dependent protein degradation by the proteasome.

The protein resides in the nucleus. Its subcellular location is the cytoplasm. Its function is as follows. NF-kappa-B is a pleiotropic transcription factor present in almost all cell types and is the endpoint of a series of signal transduction events that are initiated by a vast array of stimuli related to many biological processes such as inflammation, immunity, differentiation, cell growth, tumorigenesis and apoptosis. NF-kappa-B is a homo- or heterodimeric complex formed by the Rel-like domain-containing proteins RELA/p65, RELB, NFKB1/p105, NFKB1/p50, REL and NFKB2/p52. The dimers bind at kappa-B sites in the DNA of their target genes and the individual dimers have distinct preferences for different kappa-B sites that they can bind with distinguishable affinity and specificity. Different dimer combinations act as transcriptional activators or repressors, respectively. NF-kappa-B is controlled by various mechanisms of post-translational modification and subcellular compartmentalization as well as by interactions with other cofactors or corepressors. NF-kappa-B complexes are held in the cytoplasm in an inactive state complexed with members of the NF-kappa-B inhibitor (I-kappa-B) family. In a conventional activation pathway, I-kappa-B is phosphorylated by I-kappa-B kinases (IKKs) in response to different activators, subsequently degraded thus liberating the active NF-kappa-B complex which translocates to the nucleus. In a non-canonical activation pathway, the MAP3K14-activated CHUK/IKKA homodimer phosphorylates NFKB2/p100 associated with RelB, inducing its proteolytic processing to NFKB2/p52 and the formation of NF-kappa-B RelB-p52 complexes. The NF-kappa-B heterodimeric RelB-p52 complex is a transcriptional activator. The NF-kappa-B p52-p52 homodimer is a transcriptional repressor. NFKB2 appears to have dual functions such as cytoplasmic retention of attached NF-kappa-B proteins by p100 and generation of p52 by a cotranslational processing. The proteasome-mediated process ensures the production of both p52 and p100 and preserves their independent function. p52 binds to the kappa-B consensus sequence 5'-GGRNNYYCC-3', located in the enhancer region of genes involved in immune response and acute phase reactions. p52 and p100 are respectively the minor and major form; the processing of p100 being relatively poor. Isoform p49 is a subunit of the NF-kappa-B protein complex, which stimulates the HIV enhancer in synergy with p65. In concert with RELB, regulates the circadian clock by repressing the transcriptional activator activity of the CLOCK-BMAL1 heterodimer. The sequence is that of Nuclear factor NF-kappa-B p100 subunit (NFKB2) from Homo sapiens (Human).